The following is a 132-amino-acid chain: Small ribosomal subunit protein uS8 (132 aa).

It belongs to the universal ribosomal protein uS8 family. In terms of assembly, part of the 30S ribosomal subunit. Contacts proteins S5 and S12.

One of the primary rRNA binding proteins, it binds directly to 16S rRNA central domain where it helps coordinate assembly of the platform of the 30S subunit. This is Small ribosomal subunit protein uS8 from Tropheryma whipplei (strain Twist) (Whipple's bacillus).